Here is a 778-residue protein sequence, read N- to C-terminus: Kin of IRRE-like protein 3 (778 aa).

The N-terminal stretch at 1 to 21 is a signal peptide; it reads MRPFQLDLLFLCFFLFSQELG. The Extracellular segment spans residues 22-535; it reads LQKRGCCLVL…GLEAESVPMA (514 aa). 5 consecutive Ig-like C2-type domains span residues 48 to 142, 147 to 243, 249 to 330, 335 to 415, and 419 to 515; these read YSFS…ARLT, PDDP…TSVT, PPLV…RTVD, PRMT…VTLT, and PPII…IRLK. An intrachain disulfide couples Cys69 to Cys127. Residue Asn167 is glycosylated (N-linked (GlcNAc...) asparagine). A disulfide bridge connects residues Cys170 and Cys227. The N-linked (GlcNAc...) asparagine glycan is linked to Asn253. Cys271 and Cys314 form a disulfide bridge. Asn324 carries N-linked (GlcNAc...) asparagine glycosylation. 2 disulfides stabilise this stretch: Cys356–Cys398 and Cys440–Cys499. The N-linked (GlcNAc...) asparagine glycan is linked to Asn498. The chain crosses the membrane as a helical span at residues 536–556; that stretch reads VIIGVAVGAGVAFLVLMATIV. Over 557–778 the chain is Cytoplasmic; that stretch reads AFCCARSQRN…PLQRRMQTHV (222 aa). Positions 727–736 are enriched in polar residues; it reads CDSSVSSSGK. A disordered region spans residues 727–778; the sequence is CDSSVSSSGKQDGYVQFDKASKASASSSHHSQSSSQNSDPSRPLQRRMQTHV. Over residues 748-762 the composition is skewed to low complexity; that stretch reads KASASSSHHSQSSSQ.

The protein belongs to the immunoglobulin superfamily. As to quaternary structure, homodimer; mediates homophilic interactions to promote cell adhesion. Interacts with NPHS1; forms heterodimers with NPHS1. Interacts with NPHS2/podocin (via the C-terminus). Interacts with CASK. Interacts (via extracellular region) with MAP1B. Interacts (via extracellular region) with MYO16. Interacts (via intracellular region) with ATP1B1. Interacts (via intracellular region) with SHMT2. Interacts (via intracellular region) with UFC1. Undergoes proteolysis by a metalloprotease and gives rise to a soluble form. Expressed mainly in adult brain, bone marrow and stromal cells. Expressed in diverse regions of the brain, including the cortex, hippocampus, striatum, olfactory bulb and cerebellum. In brain, expressed in pontine nucleus neurons (at protein level). In hippocampus, produced in both the dentate granule neurons and the GABAergic neurons, but not the CA3 neurons. Expressed in subpopulations of vomeronasal sensory neurons. Expressed in a subset of neurons in dorsal root ganglia.

It localises to the cell membrane. Its subcellular location is the cell projection. The protein localises to the axon. The protein resides in the dendrite. It is found in the secreted. Its function is as follows. Synaptic adhesion molecule required for the formation of target-specific synapses. Required for formation of target-specific synapses at hippocampal mossy fiber synapses. Required for formation of mossy fiber filopodia, the synaptic structures connecting dentate granule and GABA neurons. Probably acts as a homophilic adhesion molecule that promotes trans-cellular interactions and stabilize mossy fiber filipodia contact and subsequent synapse formation. Required for the coalescence of vomeronasal sensory neuron axons. May be involved in the hematopoietic supportive capacity of stroma cells; the secreted extracellular domain is directly responsible for supporting hematopoietic stem cells. The protein is Kin of IRRE-like protein 3 (Kirrel3) of Mus musculus (Mouse).